Here is an 81-residue protein sequence, read N- to C-terminus: Weak neurotoxin OH-72 (81 aa).

The signal sequence occupies residues 1–16 (LTLVVVTIVCLDLGYT). Disulfide bonds link Cys19–Cys40, Cys22–Cys27, Cys33–Cys58, Cys62–Cys73, and Cys74–Cys79.

It belongs to the three-finger toxin family. Ancestral subfamily. Orphan group II sub-subfamily. Expressed by the venom gland.

The protein localises to the secreted. Binds with low affinity to muscular (alpha-1-beta-1-delta-epsilon/CHRNA1-CHRNB1-CHRND-CHRNE) and very low affinity to neuronal (alpha-7/CHRNA7) nicotinic acetylcholine receptor (nAChR). The protein is Weak neurotoxin OH-72 of Ophiophagus hannah (King cobra).